Reading from the N-terminus, the 452-residue chain is UDP-glycosyltransferase 76D1 (452 aa).

UDP-alpha-D-glucose-binding positions include Ser-269, 329–331 (APQ), 346–354 (HGGWNSCLE), and 368–371 (SGDQ).

This sequence belongs to the UDP-glycosyltransferase family.

Functionally, possesses low quercetin 7-O-glucosyltransferase activity in vitro. The chain is UDP-glycosyltransferase 76D1 (UGT76D1) from Arabidopsis thaliana (Mouse-ear cress).